The primary structure comprises 878 residues: Coatomer subunit gamma (878 aa).

HEAT repeat units follow at residues 64 to 101 (REATDCFFAMTKLFQSKDVVLRRMVYLGIKELSSVAED), 287 to 324 (RMLSPAFSILQLFCSSPKATLRFAAVRTLNKVAMTHPA), 326 to 359 (VTTCNLDLEGLITDSNRSVATLAITTLLKTGAES), 360 to 396 (SVERLMKQISTFVAEISDEFKIVVVQAICALCTKYPR), 399 to 434 (TVLMNFLSGMLREEGGLEYKTSIVDTIITIIEENAD), and 471 to 508 (ATPSKYIRFIYNRVILESPIVRAAAVTALSQFGASCPA).

Belongs to the COPG family. Oligomeric complex that consists of at least the alpha, beta, beta', gamma, delta, epsilon and zeta subunits.

It localises to the cytoplasm. The protein localises to the golgi apparatus membrane. Its subcellular location is the cytoplasmic vesicle. It is found in the COPI-coated vesicle membrane. The protein resides in the endoplasmic reticulum. Its function is as follows. The coatomer is a cytosolic protein complex that binds to dilysine motifs and reversibly associates with Golgi non-clathrin-coated vesicles, which further mediate biosynthetic protein transport from the ER, via the Golgi up to the trans Golgi network. Coatomer complex is required for budding from Golgi membranes, and is essential for the retrograde Golgi-to-ER transport of dilysine-tagged proteins. Required for limiting lipid storage in lipid droplets. Involved in the expansion of luminal extracellular matrices and apical membrane during tubulogenesis. Required in the tracheal epithelium for luminal protein secretion and diametric tube growth. In salivary glands, required for deposition of O-glycans and luminal extracellular matrix assembly. Required for epidermal morphogenesis and cuticle development. In Drosophila pseudoobscura pseudoobscura (Fruit fly), this protein is Coatomer subunit gamma.